Consider the following 650-residue polypeptide: Chaperone protein DnaK (650 aa).

Phosphothreonine; by autocatalysis is present on T200. Low complexity predominate over residues Q612–A636. Residues Q612–D650 form a disordered region.

It belongs to the heat shock protein 70 family.

In terms of biological role, acts as a chaperone. The chain is Chaperone protein DnaK from Burkholderia ambifaria (strain ATCC BAA-244 / DSM 16087 / CCUG 44356 / LMG 19182 / AMMD) (Burkholderia cepacia (strain AMMD)).